Reading from the N-terminus, the 793-residue chain is Facilitated trehalose transporter Tret1 (793 aa).

The Cytoplasmic portion of the chain corresponds to 1–326 (MNRKVGPVLE…LEVYRPTTNP (326 aa)). Disordered regions lie at residues 99-148 (EKAK…EHKS) and 213-235 (RHIS…FEPS). The span at 104-113 (KSSLKSSRVS) shows a compositional bias: low complexity. Over residues 115-125 (DQEDDRFDEDE) the composition is skewed to acidic residues. Residues 213–223 (RHISFKFDKEP) show a composition bias toward basic and acidic residues. Residues 327–347 (IYIWTQVLAALSVSLGSMVVG) traverse the membrane as a helical segment. Topologically, residues 348 to 376 (FSSAYTSPALVSMKDRNITSFEVTDQSGS) are extracellular. The N-linked (GlcNAc...) asparagine glycan is linked to Asn-364. A helical transmembrane segment spans residues 377 to 397 (WVGGIMPLAGLAGGILGGPMI). Residues 398–411 (EYLGRKNTILATAT) are Cytoplasmic-facing. The helical transmembrane segment at 412–432 (PFIISWLLIGCATHVAMVLVG) threads the bilayer. At 433–434 (RA) the chain is on the extracellular side. A helical membrane pass occupies residues 435–455 (LSGLCVGIASLSLPVYLGETV). Residues 456 to 460 (QPEVR) lie on the Cytoplasmic side of the membrane. A helical transmembrane segment spans residues 461 to 481 (GTLGLLPTAFGNIGILLCFVA). The Extracellular segment spans residues 482–488 (GKYLDWS). The chain crosses the membrane as a helical span at residues 489 to 509 (GLAFLGAALPIPFLLLMFLIP). The Cytoplasmic segment spans residues 510-572 (ETPRWYVSRN…DLLNKANLKP (63 aa)). A helical transmembrane segment spans residues 573–593 (LLISLGLMFFQQLSGINAVIF). Over 594–609 (YTVQIFQSAGSTIDEK) the chain is Extracellular. The chain crosses the membrane as a helical span at residues 610 to 630 (LCTIIVGVVNFIATFIATVLI). Residues 631–636 (DRLGRK) are Cytoplasmic-facing. A helical membrane pass occupies residues 637–657 (ILLYISDVAMIITLMTLGTFF). Residues 658–668 (YMKNNGDDVSE) are Extracellular-facing. Residues 669–689 (IGWLPLAAFVVFVVGFSLGFG) traverse the membrane as a helical segment. Residues 690–703 (PIPWLMMGEILPGK) are Cytoplasmic-facing. A helical membrane pass occupies residues 704 to 724 (IRGSAASVATAFNWSCTFVVT). Residues 725 to 737 (KTFADITASIGNH) lie on the Extracellular side of the membrane. The chain crosses the membrane as a helical span at residues 738-758 (GAFWMFGSICIVGLLFVIVYV). Residues 759-793 (PETQGKSLEDIERKMMGRVRRMSSVANIKPLSFNM) lie on the Cytoplasmic side of the membrane.

This sequence belongs to the major facilitator superfamily. Sugar transporter (TC 2.A.1.1) family. Trehalose transporter subfamily.

It is found in the cell membrane. In terms of biological role, high-capacity facilitative transporter for trehalose. Does not transport maltose, sucrose or lactose. Mediates the bidirectional transfer of trehalose. Responsible for the transport of trehalose synthesized in the fat body and the incorporation of trehalose into other tissues that require a carbon source, thereby regulating trehalose levels in the hemolymph. This chain is Facilitated trehalose transporter Tret1, found in Anopheles gambiae (African malaria mosquito).